The following is a 100-amino-acid chain: Small ribosomal subunit protein uS14 (100 aa).

It belongs to the universal ribosomal protein uS14 family. In terms of assembly, part of the 30S ribosomal subunit. Contacts proteins S3 and S10.

In terms of biological role, binds 16S rRNA, required for the assembly of 30S particles and may also be responsible for determining the conformation of the 16S rRNA at the A site. This is Small ribosomal subunit protein uS14 from Trichodesmium erythraeum (strain IMS101).